A 355-amino-acid polypeptide reads, in one-letter code: MKLEVNLKQNPYDIIIEKGALKGVGQWVKSLWEPQKIALITDNHVGGLYAEKVKLSLEHEGFEVVVFNFLEGEASKNLKTVNKAYEFLIKNGMTRSDGIVALGGGVVGDLAGFVASTYMRGIHFVQVPTSLTAQVDSSIGGKTGVNTPSAKNIVGTFAQPDGVLIDPNVLETLGKRELIEGMGEVVKYGLIDDPELWQLLDNIDGSVHSILENSETIIYRSCNVKRKIVVEDEFEGGVRMYLNFGHTIGHAVEQTAGYGKVMHGEAVAIGMVQISRVAEKKNLMPQGITRQIAEMCVKFGLPVDYEPWRVEELYTALTHDKKARGNSIKTVIVPEIGKAAINQIPLVEMKEYLEK.

NAD(+) is bound by residues 71–76 (EGEASK), 105–109 (GVVGD), 129–130 (TS), Lys142, and Lys151. Positions 184, 246, and 263 each coordinate Zn(2+).

The protein belongs to the sugar phosphate cyclases superfamily. Dehydroquinate synthase family. It depends on Co(2+) as a cofactor. Zn(2+) is required as a cofactor. Requires NAD(+) as cofactor.

The protein localises to the cytoplasm. The enzyme catalyses 7-phospho-2-dehydro-3-deoxy-D-arabino-heptonate = 3-dehydroquinate + phosphate. The protein operates within metabolic intermediate biosynthesis; chorismate biosynthesis; chorismate from D-erythrose 4-phosphate and phosphoenolpyruvate: step 2/7. Catalyzes the conversion of 3-deoxy-D-arabino-heptulosonate 7-phosphate (DAHP) to dehydroquinate (DHQ). The protein is 3-dehydroquinate synthase of Streptococcus thermophilus (strain ATCC BAA-491 / LMD-9).